The chain runs to 215 residues: Probable phosphoglycerate mutase GpmB (215 aa).

Residues 8 to 15 (RHGETEWN), 21 to 22 (QG), R58, 82 to 85 (ELDM), and 151 to 152 (GI) each bind substrate. H9 acts as the Tele-phosphohistidine intermediate in catalysis. The Proton donor/acceptor role is filled by E82.

Belongs to the phosphoglycerate mutase family. GpmB subfamily.

The enzyme catalyses (2R)-2-phosphoglycerate = (2R)-3-phosphoglycerate. The protein operates within carbohydrate degradation; glycolysis; pyruvate from D-glyceraldehyde 3-phosphate: step 3/5. In Proteus mirabilis (strain HI4320), this protein is Probable phosphoglycerate mutase GpmB.